Consider the following 559-residue polypeptide: Acetylcholinesterase-1 (559 aa).

A signal peptide spans Met-1–Gly-21. Cysteines 92 and 114 form a disulfide. Gly-142–Gly-143 lines the substrate pocket. Ser-223 functions as the Acyl-ester intermediate in the catalytic mechanism. Position 223 is a phosphoserine (Ser-223). A disulfide bridge connects residues Cys-276 and Cys-293. Asn-278 and Asn-342 each carry an N-linked (GlcNAc...) asparagine glycan. Glu-354 serves as the catalytic Charge relay system. An N-linked (GlcNAc...) asparagine glycan is attached at Asn-374. A disulfide bond links Cys-432 and Cys-550. His-471 serves as the catalytic Charge relay system.

This sequence belongs to the type-B carboxylesterase/lipase family. In terms of tissue distribution, expressed by the venom gland.

It is found in the secreted. The catalysed reaction is acetylcholine + H2O = choline + acetate + H(+). Functionally, terminates signal transduction at the neuromuscular junction by rapid hydrolysis of the acetylcholine released into the synaptic cleft. In Trittame loki (Brush-footed trapdoor spider), this protein is Acetylcholinesterase-1.